A 169-amino-acid chain; its full sequence is uncharacterized protein (169 aa).

Positions 1 to 21 (MVPVARASLFTLACLLVSVCA) are cleaved as a signal peptide.

Component of the acid-soluble and acid-insoluble organic matrix of calcified shell layers (at protein level).

It is found in the secreted. This is an uncharacterized protein from Haliotis asinina (Donkey's ear abalone).